Here is a 365-residue protein sequence, read N- to C-terminus: MNTLGRFLRLTTFGESHGDVIGGVLDGMPSGIKIDYALLENEMKRRQGGRNVFITPRKEDDKVEITSGVFEGFSTGTPIGFLIHNQRARSKDYDNIKNLFRPSHADFTYFHKYGIRDFRGGGRSSARESAIRVAAGAFAKMLLREIGIVCESGIIEIGGIKAKNYDFNHALKSEIFALDEEQEEVQKTAIQNAIKNHDSIGGVALIRARSAKTNQKLPIGLGQGLYAKLDAKIAEAMIGLNGVKAVEIGKGVESSLLKGSEYNDLMDQKGFLSNRSGGVLGGMSNGEEIIIRAHFKPTPSIFQPQQTIDINNQECECLLKGRHDPCIAIRGSVVCESLLSLVLADMVLLNLTSKIEYLKTIYNEN.

Arginine 46 is a binding site for NADP(+). FMN-binding positions include 123 to 125 (RSS), 241 to 242 (NG), glycine 281, 296 to 300 (KPTPS), and arginine 322.

This sequence belongs to the chorismate synthase family. As to quaternary structure, homotetramer. FMNH2 is required as a cofactor.

The catalysed reaction is 5-O-(1-carboxyvinyl)-3-phosphoshikimate = chorismate + phosphate. It functions in the pathway metabolic intermediate biosynthesis; chorismate biosynthesis; chorismate from D-erythrose 4-phosphate and phosphoenolpyruvate: step 7/7. In terms of biological role, catalyzes the anti-1,4-elimination of the C-3 phosphate and the C-6 proR hydrogen from 5-enolpyruvylshikimate-3-phosphate (EPSP) to yield chorismate, which is the branch point compound that serves as the starting substrate for the three terminal pathways of aromatic amino acid biosynthesis. This reaction introduces a second double bond into the aromatic ring system. This Helicobacter pylori (strain Shi470) protein is Chorismate synthase.